The following is a 246-amino-acid chain: Isoprenyl transferase 1 (246 aa).

Residue aspartate 19 is part of the active site. Residue aspartate 19 participates in Mg(2+) binding. Substrate contacts are provided by residues 20–23, tryptophan 24, arginine 32, histidine 36, and 64–66; these read GNGR and STD. Residue asparagine 67 is the Proton acceptor of the active site. Residues tryptophan 68, arginine 70, arginine 180, and 186-188 each bind substrate; that span reads RLS. Residue glutamate 199 coordinates Mg(2+).

The protein belongs to the UPP synthase family. Homodimer. Mg(2+) is required as a cofactor.

Functionally, catalyzes the condensation of isopentenyl diphosphate (IPP) with allylic pyrophosphates generating different type of terpenoids. The chain is Isoprenyl transferase 1 from Bradyrhizobium diazoefficiens (strain JCM 10833 / BCRC 13528 / IAM 13628 / NBRC 14792 / USDA 110).